The following is a 531-amino-acid chain: Peptide chain release factor 3 (531 aa).

The tr-type G domain maps to 13–282 (SKRRTFAIIS…GLTQWAPSPM (270 aa)). Residues 22–29 (SHPDAGKT), 90–94 (DTPGH), and 144–147 (NKLD) each bind GTP.

It belongs to the TRAFAC class translation factor GTPase superfamily. Classic translation factor GTPase family. PrfC subfamily.

The protein resides in the cytoplasm. Its function is as follows. Increases the formation of ribosomal termination complexes and stimulates activities of RF-1 and RF-2. It binds guanine nucleotides and has strong preference for UGA stop codons. It may interact directly with the ribosome. The stimulation of RF-1 and RF-2 is significantly reduced by GTP and GDP, but not by GMP. The chain is Peptide chain release factor 3 from Vibrio cholerae serotype O1 (strain ATCC 39315 / El Tor Inaba N16961).